The sequence spans 191 residues: UPF0312 protein Shewana3_1179 (191 aa).

The N-terminal stretch at 1-22 (MKKQLLAALIGGSLLAPMAASA) is a signal peptide.

Belongs to the UPF0312 family. Type 1 subfamily.

Its subcellular location is the periplasm. The chain is UPF0312 protein Shewana3_1179 from Shewanella sp. (strain ANA-3).